Here is a 70-residue protein sequence, read N- to C-terminus: DNA-directed RNA polymerase subunit omega (70 aa).

It belongs to the RNA polymerase subunit omega family. The RNAP catalytic core consists of 2 alpha, 1 beta, 1 beta' and 1 omega subunit. When a sigma factor is associated with the core the holoenzyme is formed, which can initiate transcription.

The enzyme catalyses RNA(n) + a ribonucleoside 5'-triphosphate = RNA(n+1) + diphosphate. Its function is as follows. Promotes RNA polymerase assembly. Latches the N- and C-terminal regions of the beta' subunit thereby facilitating its interaction with the beta and alpha subunits. The protein is DNA-directed RNA polymerase subunit omega of Staphylococcus saprophyticus subsp. saprophyticus (strain ATCC 15305 / DSM 20229 / NCIMB 8711 / NCTC 7292 / S-41).